A 412-amino-acid chain; its full sequence is Glucose-1-phosphate adenylyltransferase (412 aa).

Alpha-D-glucose 1-phosphate is bound by residues Y98, G163, 178 to 179, and S189; that span reads EK.

It belongs to the bacterial/plant glucose-1-phosphate adenylyltransferase family. In terms of assembly, homotetramer.

The enzyme catalyses alpha-D-glucose 1-phosphate + ATP + H(+) = ADP-alpha-D-glucose + diphosphate. It functions in the pathway glycan biosynthesis; glycogen biosynthesis. Functionally, involved in the biosynthesis of ADP-glucose, a building block required for the elongation reactions to produce glycogen. Catalyzes the reaction between ATP and alpha-D-glucose 1-phosphate (G1P) to produce pyrophosphate and ADP-Glc. This Thermosipho africanus (strain TCF52B) protein is Glucose-1-phosphate adenylyltransferase.